The primary structure comprises 421 residues: 4-hydroxy-3-methylbut-2-en-1-yl diphosphate synthase (flavodoxin) (421 aa).

Cys311, Cys314, Cys357, and Glu364 together coordinate [4Fe-4S] cluster.

It belongs to the IspG family. The cofactor is [4Fe-4S] cluster.

The enzyme catalyses (2E)-4-hydroxy-3-methylbut-2-enyl diphosphate + oxidized [flavodoxin] + H2O + 2 H(+) = 2-C-methyl-D-erythritol 2,4-cyclic diphosphate + reduced [flavodoxin]. Its pathway is isoprenoid biosynthesis; isopentenyl diphosphate biosynthesis via DXP pathway; isopentenyl diphosphate from 1-deoxy-D-xylulose 5-phosphate: step 5/6. In terms of biological role, converts 2C-methyl-D-erythritol 2,4-cyclodiphosphate (ME-2,4cPP) into 1-hydroxy-2-methyl-2-(E)-butenyl 4-diphosphate. The protein is 4-hydroxy-3-methylbut-2-en-1-yl diphosphate synthase (flavodoxin) of Xanthomonas campestris pv. campestris (strain 8004).